Consider the following 230-residue polypeptide: Protein-L-isoaspartate O-methyltransferase 1 (230 aa).

Ser-65 is an active-site residue.

The protein belongs to the methyltransferase superfamily. L-isoaspartyl/D-aspartyl protein methyltransferase family. As to quaternary structure, monomer. In terms of tissue distribution, expressed in roots, rosette leaves, stems, cauline leaves, flowers and developing seeds.

It localises to the cytoplasm. The enzyme catalyses [protein]-L-isoaspartate + S-adenosyl-L-methionine = [protein]-L-isoaspartate alpha-methyl ester + S-adenosyl-L-homocysteine. Functionally, catalyzes the methyl esterification of L-isoaspartyl residues in peptides and proteins that result from spontaneous decomposition of normal L-aspartyl and L-asparaginyl residues. It plays a role in the repair and/or degradation of damaged proteins. Contributes to seed longevity and germination vigor by limiting the abnormal accumulation of the L-isoaspartyl residues in seed proteins. This chain is Protein-L-isoaspartate O-methyltransferase 1 (PIMT1), found in Arabidopsis thaliana (Mouse-ear cress).